The primary structure comprises 361 residues: Very-long-chain 3-oxoacyl-CoA reductase (361 aa).

A helical membrane pass occupies residues 32–52 (PALILSTVGAAFLLRYTLSIF). Positions 79, 133, 163, 198, 236, 240, 269, and 271 each coordinate NADP(+). Tyr236 serves as the catalytic Proton donor. The active-site Lowers pKa of active site Tyr is the Lys240.

It belongs to the short-chain dehydrogenases/reductases (SDR) family.

The protein localises to the endoplasmic reticulum membrane. It carries out the reaction a very-long-chain (3R)-3-hydroxyacyl-CoA + NADP(+) = a very-long-chain 3-oxoacyl-CoA + NADPH + H(+). The protein operates within lipid metabolism; fatty acid biosynthesis. Component of the microsomal membrane bound fatty acid elongation system, which produces the 26-carbon very long-chain fatty acids (VLCFA) from palmitate. Catalyzes the reduction of the 3-ketoacyl-CoA intermediate that is formed in each cycle of fatty acid elongation. VLCFAs serve as precursors for ceramide and sphingolipids. The protein is Very-long-chain 3-oxoacyl-CoA reductase of Cryptococcus neoformans var. neoformans serotype D (strain B-3501A) (Filobasidiella neoformans).